A 220-amino-acid polypeptide reads, in one-letter code: Peptide methionine sulfoxide reductase MsrA (220 aa).

Residue Cys52 is part of the active site.

Belongs to the MsrA Met sulfoxide reductase family.

The enzyme catalyses L-methionyl-[protein] + [thioredoxin]-disulfide + H2O = L-methionyl-(S)-S-oxide-[protein] + [thioredoxin]-dithiol. It carries out the reaction [thioredoxin]-disulfide + L-methionine + H2O = L-methionine (S)-S-oxide + [thioredoxin]-dithiol. Its function is as follows. Has an important function as a repair enzyme for proteins that have been inactivated by oxidation. Catalyzes the reversible oxidation-reduction of methionine sulfoxide in proteins to methionine. In Corynebacterium diphtheriae (strain ATCC 700971 / NCTC 13129 / Biotype gravis), this protein is Peptide methionine sulfoxide reductase MsrA.